We begin with the raw amino-acid sequence, 364 residues long: 4-hydroxythreonine-4-phosphate dehydrogenase (364 aa).

Positions 148 and 149 each coordinate substrate. The a divalent metal cation site is built by His177, His216, and His301. Residues Lys309, Asn318, and Arg327 each coordinate substrate.

This sequence belongs to the PdxA family. In terms of assembly, homodimer. It depends on Zn(2+) as a cofactor. Requires Mg(2+) as cofactor. The cofactor is Co(2+).

It is found in the cytoplasm. It carries out the reaction 4-(phosphooxy)-L-threonine + NAD(+) = 3-amino-2-oxopropyl phosphate + CO2 + NADH. The protein operates within cofactor biosynthesis; pyridoxine 5'-phosphate biosynthesis; pyridoxine 5'-phosphate from D-erythrose 4-phosphate: step 4/5. In terms of biological role, catalyzes the NAD(P)-dependent oxidation of 4-(phosphooxy)-L-threonine (HTP) into 2-amino-3-oxo-4-(phosphooxy)butyric acid which spontaneously decarboxylates to form 3-amino-2-oxopropyl phosphate (AHAP). In Campylobacter jejuni subsp. jejuni serotype O:23/36 (strain 81-176), this protein is 4-hydroxythreonine-4-phosphate dehydrogenase.